The following is an 830-amino-acid chain: MEAFGGFFVDEKAARVENIFLEFLRRFKEADAAEAFYETELEAMRSRESTTMYVDFAHVMRFNDVLQKAISEEYLRFEPYLRNACKRFVMEQRTGENRAPIISDDSPNKDINIAFYNIPMLKRLRELGTAEIGKLTAVMGVVTRTSEVRPELLQGTFKCLDCGNVVKNVEQQFKYTEPIICVNATCQNRSKWALLRQESKFTDWQRVRMQETSKEIPAGSLPRSLDVILRHEIVEKARAGDTVIFTGTVAAVPDVMALTSPGERAECRREAPQRKNGSGVQEGVKGLKSLGVRDLSYRLAFVANSVQVADGRREVDIRDRDIDGDDSERQKFTEEEEDEVVRMRNVPDFFNKIVDSICPTVFGHQEIKRAILLMLLGGVHKITHEGINLRGDINVCIVGDPSCAKSQFLKYTAGIVPRSVYTSGKSSSAAGLTATVAKEPETGEFCIEAGALMLADNGICCIDEFDKMDIKDQVAIHEAMEQQTISITKAGIQATLNARTSILAAANPTGGRYDKSKPLKYNVALPPAILSRFDLVYIMIDEPDENTDYHIAHHIVRVHQKREEALAPAFSTAELKRYIAFAKSLKPQLSSEAKKVLVESYVTLRRGDSTPGTRVAYRMTVRQLEALIRLSEAIARSHLERVVLPAHVRMAVKLLKTSIISVESSEVDLSDFQDADDGTNVPADNDAGQPTEMDAAPQQDGPENEQAADTGKKKLVITEEHFQRVTQALVMRLRQHEESVTKDGDGLAGMKQGDLIIWYVEQQNAQGAYSSTAEVKEEVKCIKAIIERLIQRDGHLIVIDEGAAPAADDGAARRTSESRILAVNPNYVID.

The segment at Cys159–Cys186 adopts a C4-type zinc-finger fold. The region spanning Phe349 to Ile555 is the MCM domain. Gly399–Ser406 is a binding site for ATP. Residues Ser531–Asp534 carry the Arginine finger motif. The tract at residues Asp671–Thr710 is disordered.

It belongs to the MCM family. In terms of assembly, component of the minichromosome maintenance (MCM) complex, a heterotetramer composed of MCM2, MCM3, MCM4, MCM5, MCM6 and MCM7.

It localises to the nucleus. The enzyme catalyses ATP + H2O = ADP + phosphate + H(+). Functionally, probable component of the MCM2-7 complex (MCM complex) that may function as a DNA helicase and which is essential to undergo a single round of replication initiation and elongation per cell cycle in eukaryotic cells. The chain is DNA replication licensing factor MCM6 (MCM6) from Oryza sativa subsp. indica (Rice).